The chain runs to 371 residues: Transmembrane protein 229A (371 aa).

Residues Met-1–Gln-30 form a disordered region. Helical transmembrane passes span Leu-51–Val-71, Ala-117–Gly-137, Phe-235–Val-255, Leu-269–Leu-289, Val-301–Met-321, and Leu-334–Tyr-354.

The protein belongs to the TMEM229 family.

Its subcellular location is the membrane. This Mus musculus (Mouse) protein is Transmembrane protein 229A (Tmem229a).